Reading from the N-terminus, the 1394-residue chain is DNA-directed RNA polymerase subunit beta' (1394 aa).

Zn(2+) is bound by residues cysteine 70, cysteine 72, cysteine 85, and cysteine 88. Mg(2+) is bound by residues aspartate 470, aspartate 472, and aspartate 474. The Zn(2+) site is built by cysteine 815, cysteine 889, cysteine 896, and cysteine 899.

It belongs to the RNA polymerase beta' chain family. In terms of assembly, the RNAP catalytic core consists of 2 alpha, 1 beta, 1 beta' and 1 omega subunit. When a sigma factor is associated with the core the holoenzyme is formed, which can initiate transcription. Mg(2+) is required as a cofactor. Zn(2+) serves as cofactor.

It carries out the reaction RNA(n) + a ribonucleoside 5'-triphosphate = RNA(n+1) + diphosphate. DNA-dependent RNA polymerase catalyzes the transcription of DNA into RNA using the four ribonucleoside triphosphates as substrates. The protein is DNA-directed RNA polymerase subunit beta' of Anaeromyxobacter dehalogenans (strain 2CP-C).